Reading from the N-terminus, the 439-residue chain is Glutamate--tRNA ligase 1 (439 aa).

A 'HIGH' region motif is present at residues 6–16; sequence PSPTGDMHIGN. The 'KMSKS' region motif lies at 232–236; the sequence is KMSKR. Lysine 235 provides a ligand contact to ATP.

Belongs to the class-I aminoacyl-tRNA synthetase family. Glutamate--tRNA ligase type 1 subfamily. Monomer.

It is found in the cytoplasm. The enzyme catalyses tRNA(Glu) + L-glutamate + ATP = L-glutamyl-tRNA(Glu) + AMP + diphosphate. In terms of biological role, catalyzes the attachment of glutamate to tRNA(Glu) in a two-step reaction: glutamate is first activated by ATP to form Glu-AMP and then transferred to the acceptor end of tRNA(Glu). The polypeptide is Glutamate--tRNA ligase 1 (Helicobacter acinonychis (strain Sheeba)).